Reading from the N-terminus, the 2555-residue chain is MDVSKEAGHHANGFANGNTNGTTNGHTNGHTNAHTNVHTNVHTNGHANGHTKVHTNGNTNGTANETANEATNRTPNATSTTTTTFEGQLPQVPVAICGIGVRLPGGVRSDSDLYQMLVEKRDARAIVPADRYNIKSYYDPRGRPGSILTEYGYYIDEDLAQMDASMFSMSNVELSMMDPAQRLLLEVTREAFEGAGEGDFRGKNIGTFVGDFTTDWQELQYADLIHTAPYQVIGGSDFVLSNRLAYEYNLTGPSASIKTACSATAEALHEALLAIRAGSCPSAIVAGANLILTPRGGIGMTAMGVLSPDGSCKTFDSSANGFARGDSVCAIYIKRLDLALRDGNPIRAVIRACDSNADGGGTGRTFGTPNPITHEALIRKTYADAGLELHNTSVIECHGTGTPIGDPLEAEAVANCFADGKRPVYIGSVKPNLGHGEGGSAMASIIKAVVALENRTIIPNVKFKNPNPKIAWDKNLKVPTEPLPWPQDCQERMSINSFGLGGSNTHIIIDSAASFGIPSPHSSLHETADLSNEAQTSILLMSANSLSSITAMSQRYSEYVQAHPDRVEDMAYTLATRRERLKQASYCIFNDGVLSTPPPPVVSSGIVQTAFIFTGQGAQWLGMGKELMQQQRAFAHSIREMDAVIKSLEYAPDWSLEDSDADKSALAQTDRAQPISTALQVALVDLLATWNVHPAAVVGHSSGEVAAAYAARILTRREAIITAFYRGHACARCEIPGGMAAVGLGRTKVEPLLKSGVVIACENSNASVTISGDRDALEEAMAGLREKYPTTLVRKLQVPMGYHSHHMATVADLYHRLVSPHLDPKSPQVPYFSTVYGRQVQEAKAFGPSYWQLNMESPVLFRTAVSEMLREMGSNTAHLEVGPHSALAGPLRQIYEETGLSAPYASTMVRGQNSCTAFLEGIGKLFCFGLSPQIPSSKTRTVLPDIPTYPWDYKDKFWSETRVMSNWRFKKHRTHELLGERSLESSDIEPCWRNLLRTGTVPWLADHCVGSDIIFPAAGFIAMAGAAASQLAGSDGHYTVREVHIFSALVLHETTATELITTLRKQPLTSSLQSKWFEFSISSESNGVWTKYCSGLVTASVVTSAGLPEMPDTTAFSRKVDTSRWYTSMSRIGLNYGRRFVGLEDISCSPVHQVASVQINDVQDDYEPYPLHPSTIDKFLQSWTLAFTKGEYRLLTQLYLPTFIEELSVAPAPGKKISGRTLASGIPGTTVGSSLGVVDDELVLSLRGFKCKKTDDAFIQNVSKPRSMTLEWHLDTNFTDLHQLIKPTRDTAPENEILERLYVLYALENWDQLKNSTSSHPHLNIYLSWLEEEVKGFTEPGHPLISDSKELVSMDVPHRRREIAFLRQRSKHYPMAAAVEVYARTCARMVEIMEGKDNLLNVLLEGDLLAKFYNYYNDASDLSSFFQAAGLNKPHMRVLEIGAGTGGWTAHALRGLTSELGDRLYEEYTITDVSHGFLNQCKERFAAHSNIKYALLDISSDPLEQGFEEGYYDIVIASNLVETLCRCRKVLNPAGCLLIQEACAPGSRHGYIMGLFEGWWAGREDGRVRSPLIPVEEWDARLKLAGFEGAGTVVLDGQVPYYNYANIIARPAPTTIAQPESRLTLMTSSPELEDFSAILKTMLEEAGYLLDVCPWGADLPSDQDVVFLVDTEASVPVLADENPDNLATFLRYMKDISTSTVLWVTKPAQTICPDPRHGLITGMARTLRAELDMYIATLEIHKLDKPAASAVVQVLRKLQDAARLEESQGDEKSSDIKVDFEYAFSNGELLIPRFHPFVVDQVLLKDVPCADSRHLEIAQRGMLNTLHWVGDTLPELGPSEVELNMTAVGMNFLDLAVAMNIVDMAQSLGKGYNALGSEGSGIVTRVGSSVTNLKVGDRVATMGVDTSVFASKLQRPAESCVRLPPGLSDEDAAGILVPYATVLWSFIEKARLKKGQTVLIHSAAGGVGIAAIHVARWIGAEIYTTVGAQAKVDFLVNELDVPRDRIFHSRDDSFVKDVLSATNGKGIDVVLNSLSGELLHATWQCVAPGGCMLEIGKRDFLGRAQLAMHLFEENRAYFGIDLSRLALSEPEALQELLQKTMVLLEKQQLQPLWPTNTFDAVAVEDAFRYMQRGVHMGRIVVRMPEDDSVLPIAPVLPEPQFKADSTYLLTGGMGGLGRSIIRWMVSYGAKDITVMSRSAGNRDVDRALIAEIGELGCTLQCFAADIADMHSLQNVLSSLSKPVAGVLHMAMVLRDVGTLNMDFDSWTAALRPKVQGTWNLHDKLSENLDFFVLFSSISGTLGSYGQANYAAGNTFLDSFVRFRHGLGRPASVIDIAAIGDVGYVAETKDVAERIGRAFGSLGTEQEFLDTLQLAIARSTGPPEQQELSSKKTTKYAQPSQIVMHNRMIPPLSDPRNTTPWKNDARMAIYRNTEEAPQSTSSQSKERLGLFLVSLTTDPDQLDEPETPIIFAQEIAKRVAAFLMKGDKEDNALDTSLTLSQMGADSLVAIEIRNWWKQTFGMEISTLELNSPGQTFDSLGRLATKRLKEAYILKSS.

The disordered stretch occupies residues Met-1–Thr-84. The span at His-10–Thr-84 shows a compositional bias: low complexity. The Ketosynthase family 3 (KS3) domain maps to Gln-91–Ser-511. Catalysis depends on for beta-ketoacyl synthase activity residues Cys-261, His-398, and His-435. The interval Phe-611 to Phe-928 is malonyl-CoA:ACP transacylase (MAT) domain. The N-terminal hotdog fold stretch occupies residues His-975–Ser-1104. The dehydratase (DH) domain stretch occupies residues His-975–Asp-1256. A PKS/mFAS DH domain is found at His-975–Gln-1260. The active-site Proton acceptor; for dehydratase activity is His-1007. The segment at Ser-1117–Gln-1260 is C-terminal hotdog fold. Catalysis depends on Asp-1177, which acts as the Proton donor; for dehydratase activity. Residues Ser-1424 to Leu-1595 form a methyltransferase (CMet) domain region. Positions Gly-1821–Val-2141 are enoyl reductase (ER) (ER) domain. A ketoreductase (KR) domain region spans residues Ser-2165–Ile-2338. One can recognise a Carrier domain in the interval Ile-2468–Leu-2546. Ser-2505 bears the O-(pantetheine 4'-phosphoryl)serine mark.

Its pathway is secondary metabolite biosynthesis. Functionally, highly reducing polyketide synthase (HR-PKS); part of the gene cluster that mediates the biosynthesis of squalestatin S1 (SQS1, also known as zaragozic acid A), a heavily oxidized fungal polyketide that offers potent cholesterol lowering activity by targeting squalene synthase (SS). SQS1 is composed of a 2,8-dioxobicyclic[3.2.1]octane-3,4,5-tricarboxyclic acid core that is connected to two lipophilic polyketide arms. These initial steps feature the priming of an unusual benzoic acid starter unit onto the highly reducing polyketide synthase clz14, followed by oxaloacetate extension and product release to generate a tricarboxylic acid containing product. The phenylalanine ammonia lyase (PAL) clz10 and the acyl-CoA ligase clz12 are involved in transforming phenylalanine into benzoyl-CoA. The citrate synthase-like protein clz17 is involved in connecting the C-alpha-carbons of the hexaketide chain and oxaloacetate to afford the tricarboxylic acid unit. The potential hydrolytic enzymes, clz11 and clz13, are in close proximity to pks2 and may participate in product release. On the other side, the tetraketide arm is synthesized by a the squalestatin tetraketide synthase clz2 and enzymatically esterified to the core in the last biosynthetic step, by the acetyltransferase clz6. The biosynthesis of the tetraketide must involve 3 rounds of chain extension. After the first and second rounds methyl-transfer occurs, and in all rounds of extension the ketoreductase and dehydratase are active. The enoyl reductase and C-MeT of clz2 are not active in the final round of extension. The acetyltransferase clz6 appears to have a broad substrate selectivity for its acyl CoA substrate, allowing the in vitro synthesis of novel squalestatins. The biosynthesis of SQS1 requires several oxidative steps likely performed by oxidoreductases clz3, clz15 and clz16. Finally, in support of the identification of the cluster as being responsible for SQS1 production, the cluster contains a gene encoding a putative squalene synthase (SS) clz20, suggesting a likely mechanism for self-resistance. This is Squalestatin hexaketide synthase clz14 from Cochliobolus lunatus (Filamentous fungus).